A 60-amino-acid polypeptide reads, in one-letter code: Large ribosomal subunit protein bL32 (60 aa).

Residues 1 to 25 (MAVQQNKKSPSKRGMHRSHNALNVP) form a disordered region. Residues 9–19 (SPSKRGMHRSH) show a composition bias toward basic residues.

The protein belongs to the bacterial ribosomal protein bL32 family.

The chain is Large ribosomal subunit protein bL32 from Polaromonas naphthalenivorans (strain CJ2).